Reading from the N-terminus, the 65-residue chain is Beta-defensin 17 (65 aa).

An N-terminal signal peptide occupies residues 1 to 19; the sequence is MKFHLLFFILLFSITILTG. Disulfide bonds link cysteine 35-cysteine 63, cysteine 42-cysteine 56, and cysteine 46-cysteine 64.

The protein belongs to the beta-defensin family.

It is found in the secreted. Its function is as follows. Has antibacterial activity. The chain is Beta-defensin 17 (Defb17) from Rattus norvegicus (Rat).